We begin with the raw amino-acid sequence, 126 residues long: Small ribosomal subunit protein eS6 (126 aa).

It belongs to the eukaryotic ribosomal protein eS6 family.

This Thermococcus sibiricus (strain DSM 12597 / MM 739) protein is Small ribosomal subunit protein eS6.